The chain runs to 184 residues: Photosystem I assembly protein Ycf4 (184 aa).

Transmembrane regions (helical) follow at residues 22 to 42 (FFWA…GTSS) and 57 to 77 (IIFF…LFIS).

It belongs to the Ycf4 family.

It localises to the plastid. Its subcellular location is the chloroplast thylakoid membrane. In terms of biological role, seems to be required for the assembly of the photosystem I complex. This chain is Photosystem I assembly protein Ycf4, found in Aethionema cordifolium (Lebanon stonecress).